Consider the following 401-residue polypeptide: Ufm1-specific protease 2 (401 aa).

Catalysis depends on residues Cys-234, Asp-358, and His-360.

The protein belongs to the peptidase C78 family.

It is found in the endoplasmic reticulum. Its subcellular location is the cytoplasm. The protein localises to the nucleus. Functionally, thiol-dependent isopeptidase that specifically cleaves UFM1, a ubiquitin-like modifier protein, from conjugated proteins. While it is also able to mediate the processing of UFM1 precursors, a prerequisite for conjugation reactions, ufsp2 mainly acts as a protein deUFMylase that mediates deconjugation of UFM1 from target proteins. This chain is Ufm1-specific protease 2, found in Danio rerio (Zebrafish).